Here is a 329-residue protein sequence, read N- to C-terminus: Trem-like transcript 2 protein (329 aa).

Positions 1-24 are cleaved as a signal peptide; it reads MEPWPLTFLLLLLLLLWLQGCVSG. The Ig-like V-type domain maps to 25–126; that stretch reads HSNENLYRKV…HFYPLVGFQL (102 aa). Residues 25–270 lie on the Extracellular side of the membrane; it reads HSNENLYRKV…NRSQETYIPA (246 aa). 2 cysteine pairs are disulfide-bonded: C46–C110 and C61–C68. Residues 202–259 are disordered; the sequence is FIDTSGTVTEPERNTESQPATLSPSNARSFSADPVTTSTMSRHQSSSLSTTGTCHPLT. The span at 217–259 shows a compositional bias: polar residues; that stretch reads ESQPATLSPSNARSFSADPVTTSTMSRHQSSSLSTTGTCHPLT. N261 is a glycosylation site (N-linked (GlcNAc...) asparagine). A helical membrane pass occupies residues 271-291; the sequence is MVVVLTFLPAPVVLVVAYGFW. The Cytoplasmic segment spans residues 292 to 329; the sequence is KKRHMGRYNLGSNYAKPWIHLPEGPETPWKPAWSKITQ.

Interacts with CD276 and this interaction enhances T-cell activation. As to expression, detected in B-lymphocytes and macrophages. Detected in spleen, lymph nodes, blood, bone marrow and cells from the peritoneal cavity (at protein level).

The protein localises to the cell membrane. Its function is as follows. Cell surface receptor that may play a role in the innate and adaptive immune response. Acts as a counter-receptor for CD276 and interaction with CD276 on T-cells enhances T-cell activation. The chain is Trem-like transcript 2 protein (Treml2) from Mus musculus (Mouse).